A 367-amino-acid polypeptide reads, in one-letter code: MNGSQTLVVKLGTSVLTGGSLRLNRAHIVELVRQCAQQHAAGHRIVIVTSGAIAAGREHLGYPELPATIASKQLLAAVGQSRLIQLWEQLFSIYGIHVGQMLLTRADLEDRERFLNARDTMTALLDNRIVPVINENDAVATAEIKVGDNDNLSALAAILAGADKLLLLTDQQGLYTADPRNNPQAELIREVHGIDDALRAIAGDSVSGLGTGGMGTKLQAADVACRAGIDVVIAAGSKPGVVADVIEGKPVGTRFHALETPLENRKRWIFGAPPAGEITVDDGAVEAMMARGSSLLPKGIREVKGDFSRGEVIRIRNLTGRDLAHGVSRYNSDAMRMIAGHHSQEISEILGYEYGPVAVHRDDMIVS.

K10 is an ATP binding site. Positions 50, 137, and 149 each coordinate substrate. Residues 169 to 170 and 211 to 217 contribute to the ATP site; these read TD and TGGMGTK. The 79-residue stretch at 275-353 folds into the PUA domain; it reads AGEITVDDGA…QEISEILGYE (79 aa).

The protein belongs to the glutamate 5-kinase family.

Its subcellular location is the cytoplasm. It carries out the reaction L-glutamate + ATP = L-glutamyl 5-phosphate + ADP. Its pathway is amino-acid biosynthesis; L-proline biosynthesis; L-glutamate 5-semialdehyde from L-glutamate: step 1/2. With respect to regulation, proline-mediated feedback inhibition. Catalyzes the transfer of a phosphate group to glutamate to form L-glutamate 5-phosphate. This is Glutamate 5-kinase from Serratia marcescens.